Here is a 268-residue protein sequence, read N- to C-terminus: Phosphatidylglycerol--prolipoprotein diacylglyceryl transferase (268 aa).

The next 7 helical transmembrane spans lie at 10 to 30 (VALAIGPLKIHWYGLMYLIGI), 56 to 76 (LVFWLSMGVIVGGRLGYVLFY), 92 to 112 (WKGGMSFHGGFIGVMLAALWF), 120 to 140 (FFELMDFVAPLVPIGLGAGRI), 174 to 194 (PSQLYQFALEGVALFVILWLF), 202 to 222 (MAVSGMFSLCYGIFRFAVEFV), and 236 to 256 (WLTQGQLLCIPMIVGGLVLIW). Arg-139 is an a 1,2-diacyl-sn-glycero-3-phospho-(1'-sn-glycerol) binding site.

This sequence belongs to the Lgt family.

The protein localises to the cell inner membrane. It catalyses the reaction L-cysteinyl-[prolipoprotein] + a 1,2-diacyl-sn-glycero-3-phospho-(1'-sn-glycerol) = an S-1,2-diacyl-sn-glyceryl-L-cysteinyl-[prolipoprotein] + sn-glycerol 1-phosphate + H(+). It functions in the pathway protein modification; lipoprotein biosynthesis (diacylglyceryl transfer). Its function is as follows. Catalyzes the transfer of the diacylglyceryl group from phosphatidylglycerol to the sulfhydryl group of the N-terminal cysteine of a prolipoprotein, the first step in the formation of mature lipoproteins. In Pseudomonas putida (strain ATCC 47054 / DSM 6125 / CFBP 8728 / NCIMB 11950 / KT2440), this protein is Phosphatidylglycerol--prolipoprotein diacylglyceryl transferase.